The following is a 340-amino-acid chain: uncharacterized protein (340 aa).

Its subcellular location is the virion. This is an uncharacterized protein from Acanthamoeba polyphaga (Amoeba).